Reading from the N-terminus, the 226-residue chain is ATP-dependent dethiobiotin synthetase BioD (226 aa).

ATP is bound at residue Asp13 to Leu18. Residue Thr17 coordinates Mg(2+). Lys38 is an active-site residue. ATP is bound by residues Asp55, Glu117–Gly120, Asn177–Arg178, Pro206–Val208, and Glu213. Residues Asp55 and Glu117 each coordinate Mg(2+).

The protein belongs to the dethiobiotin synthetase family. In terms of assembly, homodimer. It depends on Mg(2+) as a cofactor.

The protein localises to the cytoplasm. It catalyses the reaction (7R,8S)-7,8-diammoniononanoate + CO2 + ATP = (4R,5S)-dethiobiotin + ADP + phosphate + 3 H(+). It functions in the pathway cofactor biosynthesis; biotin biosynthesis; biotin from 7,8-diaminononanoate: step 1/2. Functionally, catalyzes a mechanistically unusual reaction, the ATP-dependent insertion of CO2 between the N7 and N8 nitrogen atoms of 7,8-diaminopelargonic acid (DAPA, also called 7,8-diammoniononanoate) to form a ureido ring. The polypeptide is ATP-dependent dethiobiotin synthetase BioD (Aeromonas hydrophila subsp. hydrophila (strain ATCC 7966 / DSM 30187 / BCRC 13018 / CCUG 14551 / JCM 1027 / KCTC 2358 / NCIMB 9240 / NCTC 8049)).